The sequence spans 201 residues: ATP-dependent Clp protease proteolytic subunit (201 aa).

The Nucleophile role is filled by Ser101. The active site involves His126.

Belongs to the peptidase S14 family. As to quaternary structure, component of the chloroplastic Clp protease core complex.

The protein localises to the plastid. It localises to the chloroplast stroma. The enzyme catalyses Hydrolysis of proteins to small peptides in the presence of ATP and magnesium. alpha-casein is the usual test substrate. In the absence of ATP, only oligopeptides shorter than five residues are hydrolyzed (such as succinyl-Leu-Tyr-|-NHMec, and Leu-Tyr-Leu-|-Tyr-Trp, in which cleavage of the -Tyr-|-Leu- and -Tyr-|-Trp bonds also occurs).. Cleaves peptides in various proteins in a process that requires ATP hydrolysis. Has a chymotrypsin-like activity. Plays a major role in the degradation of misfolded proteins. The polypeptide is ATP-dependent Clp protease proteolytic subunit (Staurastrum punctulatum (Green alga)).